A 590-amino-acid polypeptide reads, in one-letter code: NADH-ubiquinone oxidoreductase chain 5 (590 aa).

15 helical membrane passes run 1-21, 31-51, 77-97, 104-124, 130-150, 167-187, 190-210, 230-250, 261-281, 314-336, 355-375, 398-418, 439-461, 466-486, and 568-588; these read MNLI…MSIM, LMVL…NNEL, LLFT…SLWY, INKF…IITA, LFIG…WWHG, IGDI…SINM, LMIQ…AAAT, TPVS…FLLI, IMLT…AAAA, AFLH…GSYI, LPMT…MPFL, IMIT…IMLF, HPLA…STLQ, VTMP…GVLL, and MIKN…LFIM.

This sequence belongs to the complex I subunit 5 family.

Its subcellular location is the mitochondrion inner membrane. It carries out the reaction a ubiquinone + NADH + 5 H(+)(in) = a ubiquinol + NAD(+) + 4 H(+)(out). Core subunit of the mitochondrial membrane respiratory chain NADH dehydrogenase (Complex I) that is believed to belong to the minimal assembly required for catalysis. Complex I functions in the transfer of electrons from NADH to the respiratory chain. The immediate electron acceptor for the enzyme is believed to be ubiquinone. This Lycodon semicarinatus (Ryukyu odd-tooth snake) protein is NADH-ubiquinone oxidoreductase chain 5 (MT-ND5).